Here is a 345-residue protein sequence, read N- to C-terminus: tRNA-specific 2-thiouridylase MnmA (345 aa).

ATP is bound by residues 6–13 and Leu32; that span reads LMSGGVDS. The active-site Nucleophile is the Cys92. The cysteines at positions 92 and 191 are disulfide-linked. Gly116 is a binding site for ATP. An interaction with tRNA region spans residues 138-140; the sequence is KDQ. Cys191 (cysteine persulfide intermediate) is an active-site residue. Residues 293–294 form an interaction with tRNA region; the sequence is RY.

It belongs to the MnmA/TRMU family.

It is found in the cytoplasm. It catalyses the reaction S-sulfanyl-L-cysteinyl-[protein] + uridine(34) in tRNA + AH2 + ATP = 2-thiouridine(34) in tRNA + L-cysteinyl-[protein] + A + AMP + diphosphate + H(+). Its function is as follows. Catalyzes the 2-thiolation of uridine at the wobble position (U34) of tRNA, leading to the formation of s(2)U34. The chain is tRNA-specific 2-thiouridylase MnmA from Helicobacter hepaticus (strain ATCC 51449 / 3B1).